A 357-amino-acid chain; its full sequence is Chorismate synthase (357 aa).

Arginine 47 lines the NADP(+) pocket. Residues 123–125, glycine 281, 296–300, and arginine 324 each bind FMN; these read RAS and KPTSS.

The protein belongs to the chorismate synthase family. In terms of assembly, homotetramer. FMNH2 is required as a cofactor.

It catalyses the reaction 5-O-(1-carboxyvinyl)-3-phosphoshikimate = chorismate + phosphate. It functions in the pathway metabolic intermediate biosynthesis; chorismate biosynthesis; chorismate from D-erythrose 4-phosphate and phosphoenolpyruvate: step 7/7. Its function is as follows. Catalyzes the anti-1,4-elimination of the C-3 phosphate and the C-6 proR hydrogen from 5-enolpyruvylshikimate-3-phosphate (EPSP) to yield chorismate, which is the branch point compound that serves as the starting substrate for the three terminal pathways of aromatic amino acid biosynthesis. This reaction introduces a second double bond into the aromatic ring system. The chain is Chorismate synthase from Chlamydia trachomatis serovar D (strain ATCC VR-885 / DSM 19411 / UW-3/Cx).